A 1569-amino-acid polypeptide reads, in one-letter code: Zinc finger protein GLI3 (1569 aa).

Composition is skewed to polar residues over residues 1–10 (MEAQSRSTTA) and 416–432 (AAQQNKPTSESAVSSTG). 2 disordered regions span residues 1–79 (MEAQ…STSS) and 414–461 (SEAA…DQPD). 5 C2H2-type zinc fingers span residues 485-510 (TNCHWEGCSREFDTQEQLVHHINNDH), 518-545 (FVCRWLDCSREQKPFKAQYMLVVHMRRH), 551-575 (HKCTFEGCSKAYSRLENLKTHLRSH), 581-606 (YVCEHEGCNKAFSNASDRAKHQNRTH), and 612-637 (YVCKIPGCTKRYTDPSSLRKHVKTVH). Disordered regions lie at residues 625–731 (DPSS…YTNS), 899–921 (SYDPISTDASRRSSETSQCDGLP), 1202–1228 (PKSGLSQQRGYQHHTQNNPQAPQQNLD), and 1335–1364 (SNQTTSGQNGNTTDGTRSFLSTTQNGGEQQ). Basic and acidic residues predominate over residues 637 to 653 (HGPEAHVTKKQRGDIHP). The span at 663–676 (SHSQSRSPGQQTQG) shows a compositional bias: polar residues. Residues 678–704 (HGEHKDLSNTTSKHEECLQVRSVKTEK) are compositionally biased toward basic and acidic residues. Positions 705 to 731 (PMSSQPSPGGKSSCSRQQSPISNYTNS) are enriched in polar residues. Positions 1335–1350 (SNQTTSGQNGNTTDGT) are enriched in low complexity. A compositionally biased stretch (polar residues) spans 1352–1364 (SFLSTTQNGGEQQ).

This sequence belongs to the GLI C2H2-type zinc-finger protein family. Phosphorylation is essential for its proteolytic processing. Post-translationally, the repressor form (GLI3R), a C-terminally truncated form is generated from the full-length GLI3 protein (GLI3FL) through proteolytic processing.

It is found in the nucleus. Its subcellular location is the cytoplasm. Its function is as follows. Has a dual function as a transcriptional activator and a repressor of the sonic hedgehog (Shh) pathway, and may play a role in limb development. May bind to the minimal GLI-consensus sequence 5'-GGGTGGTC-3'. Has an essential role in the early embryonic patterning of mesoderm and neuroectoderm. This chain is Zinc finger protein GLI3 (gli3), found in Xenopus laevis (African clawed frog).